The following is a 154-amino-acid chain: Large ribosomal subunit protein uL30 (154 aa).

It belongs to the universal ribosomal protein uL30 family. In terms of assembly, part of the 50S ribosomal subunit.

This Methanoregula boonei (strain DSM 21154 / JCM 14090 / 6A8) protein is Large ribosomal subunit protein uL30.